A 284-amino-acid polypeptide reads, in one-letter code: Interferon antagonist OPG039 (284 aa).

ANK repeat units follow at residues 29–58 (NGHS…LKNL), 60–89 (DNEF…DDSQ), 93–122 (KGNT…RLMF), 127–157 (GWKT…PFDL), 159–188 (ILLS…STNT), and 192–221 (LFIP…NIYS).

Belongs to the orthopoxvirus OPG039 family.

The protein localises to the host cytoplasm. It localises to the host nucleus. In terms of biological role, inhibits antiviral activity induced by type I interferons. Does not block signal transduction of IFN, but is important to counter the host antiviral state induced by a pre-treatment with IFN. Plays a role in the inhibition of host NF-kappa-B activation by preventing the acetylation of the RELA/p65 subunit of NF-kappaB. The sequence is that of Interferon antagonist OPG039 (OPG039) from Cynomys gunnisoni (Gunnison's prairie dog).